Consider the following 239-residue polypeptide: Probable transcriptional regulatory protein BCAH187_A0615 (239 aa).

The protein belongs to the TACO1 family. YeeN subfamily.

It localises to the cytoplasm. The sequence is that of Probable transcriptional regulatory protein BCAH187_A0615 from Bacillus cereus (strain AH187).